Reading from the N-terminus, the 586-residue chain is RNA-directed RNA polymerase subunit beta (586 aa).

The RdRp catalytic domain maps to 259–391; sequence VRAYSGSCSN…TNEKKTFFDG (133 aa). 3 residues coordinate Mg(2+): Asp274, Asp359, and Asp360.

Homodimer; the replicase complex can dimerize. Part of the viral RNA-dependent RNA polymerase complex, the other subunits are the host ribosomal protein S1, EF-Tu and EF-Ts. S1 is needed for the initiation of genomic RNA (+)-strand replication. Mg(2+) is required as a cofactor.

The enzyme catalyses RNA(n) + a ribonucleoside 5'-triphosphate = RNA(n+1) + diphosphate. Functionally, this is the catalytic subunit of the viral RNA-dependent RNA polymerase complex. This complex is involved in viral RNA replication that produces (+)-stranded genomes via a complementary, (-)-stranded intermediate. Binds RNA cooperatively with the host ribosomal protein S1. The polypeptide is RNA-directed RNA polymerase subunit beta (Escherichia coli).